A 375-amino-acid chain; its full sequence is tRNA-specific 2-thiouridylase MnmA (375 aa).

ATP is bound by residues 8–15 (GLSGGVDS) and Met34. The interaction with target base in tRNA stretch occupies residues 104 to 106 (NPD). Cys109 (nucleophile) is an active-site residue. A disulfide bridge links Cys109 with Cys205. Residue Gly133 coordinates ATP. The tract at residues 155-157 (KDQ) is interaction with tRNA. Cys205 serves as the catalytic Cysteine persulfide intermediate. The interaction with tRNA stretch occupies residues 313-314 (RY).

It belongs to the MnmA/TRMU family.

It is found in the cytoplasm. The catalysed reaction is S-sulfanyl-L-cysteinyl-[protein] + uridine(34) in tRNA + AH2 + ATP = 2-thiouridine(34) in tRNA + L-cysteinyl-[protein] + A + AMP + diphosphate + H(+). Catalyzes the 2-thiolation of uridine at the wobble position (U34) of tRNA, leading to the formation of s(2)U34. The chain is tRNA-specific 2-thiouridylase MnmA from Acholeplasma laidlawii (strain PG-8A).